We begin with the raw amino-acid sequence, 666 residues long: Probable potassium transport system protein Kup (666 aa).

The next 12 membrane-spanning stretches (helical) occupy residues 16 to 36, 58 to 78, 99 to 119, 141 to 161, 167 to 187, 221 to 241, 253 to 273, 292 to 312, 343 to 363, 373 to 393, 402 to 422, and 424 to 444; these read GFII…LYTM, ISLI…LVAL, TPWL…DGAL, IFQN…LLFA, TGVI…FLGI, IFIL…YSDL, WPFV…WILA, FTMH…QALI, TYIP…VLLF, YGLA…FFLI, VLLM…ASAV, and FMHG…IMTI.

The protein belongs to the HAK/KUP transporter (TC 2.A.72) family.

Its subcellular location is the cell membrane. It catalyses the reaction K(+)(in) + H(+)(in) = K(+)(out) + H(+)(out). Functionally, transport of potassium into the cell. Likely operates as a K(+):H(+) symporter. The protein is Probable potassium transport system protein Kup of Streptococcus agalactiae serotype Ia (strain ATCC 27591 / A909 / CDC SS700).